The chain runs to 362 residues: Dihydroorotate dehydrogenase (quinone) (362 aa).

FMN contacts are provided by residues 62–66 and T86; that span reads AGYDK. K66 provides a ligand contact to substrate. Residue 111–115 coordinates substrate; sequence NRLGF. FMN is bound by residues N139 and N170. Substrate is bound at residue N170. The active-site Nucleophile is S173. N175 provides a ligand contact to substrate. Residues K215 and S243 each contribute to the FMN site. Residue 244 to 245 coordinates substrate; sequence NT. FMN-binding positions include G266, G295, and 316-317; that span reads YS.

Belongs to the dihydroorotate dehydrogenase family. Type 2 subfamily. As to quaternary structure, monomer. It depends on FMN as a cofactor.

It localises to the cell membrane. It carries out the reaction (S)-dihydroorotate + a quinone = orotate + a quinol. The protein operates within pyrimidine metabolism; UMP biosynthesis via de novo pathway; orotate from (S)-dihydroorotate (quinone route): step 1/1. Its function is as follows. Catalyzes the conversion of dihydroorotate to orotate with quinone as electron acceptor. In Sinorhizobium fredii (strain NBRC 101917 / NGR234), this protein is Dihydroorotate dehydrogenase (quinone).